We begin with the raw amino-acid sequence, 318 residues long: Biotin synthase (318 aa).

The Radical SAM core domain maps to D46–R272. Positions 61, 65, and 68 each coordinate [4Fe-4S] cluster. [2Fe-2S] cluster-binding residues include C105, C138, C197, and K267.

This sequence belongs to the radical SAM superfamily. Biotin synthase family. In terms of assembly, homodimer. It depends on [4Fe-4S] cluster as a cofactor. [2Fe-2S] cluster is required as a cofactor.

It carries out the reaction (4R,5S)-dethiobiotin + (sulfur carrier)-SH + 2 reduced [2Fe-2S]-[ferredoxin] + 2 S-adenosyl-L-methionine = (sulfur carrier)-H + biotin + 2 5'-deoxyadenosine + 2 L-methionine + 2 oxidized [2Fe-2S]-[ferredoxin]. The protein operates within cofactor biosynthesis; biotin biosynthesis; biotin from 7,8-diaminononanoate: step 2/2. In terms of biological role, catalyzes the conversion of dethiobiotin (DTB) to biotin by the insertion of a sulfur atom into dethiobiotin via a radical-based mechanism. This is Biotin synthase from Cenarchaeum symbiosum (strain A).